We begin with the raw amino-acid sequence, 85 residues long: Toxin Cll7 (85 aa).

Positions 1-19 (MNSLLMITACLVLFGTVWA) are cleaved as a signal peptide. The LCN-type CS-alpha/beta domain maps to 20-83 (KEGYLVNTYT…TWPLPNKTCG (64 aa)). Cystine bridges form between C31-C82, C35-C58, C44-C63, and C48-C65.

This sequence belongs to the long (4 C-C) scorpion toxin superfamily. Sodium channel inhibitor family. Beta subfamily. Expressed by the venom gland.

It is found in the secreted. Its function is as follows. Beta toxins bind voltage-independently at site-4 of sodium channels (Nav) and shift the voltage of activation toward more negative potentials thereby affecting sodium channel activation and promoting spontaneous and repetitive firing. The protein is Toxin Cll7 of Centruroides limpidus (Mexican scorpion).